Consider the following 98-residue polypeptide: N(2)-fixation sustaining protein CowN (98 aa).

Belongs to the CowN family.

In terms of biological role, is required to sustain N(2)-dependent growth in the presence of low levels of carbon monoxide (CO). Probably acts by protecting the N(2) fixation ability of the nitrogenase complex, which is inactivated in the presence of CO. In Trichlorobacter lovleyi (strain ATCC BAA-1151 / DSM 17278 / SZ) (Geobacter lovleyi), this protein is N(2)-fixation sustaining protein CowN.